The primary structure comprises 344 residues: Phenylalanine--tRNA ligase alpha subunit (344 aa).

A Mg(2+)-binding site is contributed by glutamate 269.

Belongs to the class-II aminoacyl-tRNA synthetase family. Phe-tRNA synthetase alpha subunit type 1 subfamily. Tetramer of two alpha and two beta subunits. Requires Mg(2+) as cofactor.

Its subcellular location is the cytoplasm. It catalyses the reaction tRNA(Phe) + L-phenylalanine + ATP = L-phenylalanyl-tRNA(Phe) + AMP + diphosphate + H(+). This chain is Phenylalanine--tRNA ligase alpha subunit, found in Ralstonia pickettii (strain 12J).